We begin with the raw amino-acid sequence, 347 residues long: CDK2-associated and cullin domain-containing protein 1 (347 aa).

A compositionally biased stretch (acidic residues) spans 1–11 (MEESMEEEEML). Disordered stretches follow at residues 1-63 (MEES…LPGG) and 320-347 (RGDQ…RGYR). Over residues 34–49 (QPPPAPPLPPPPPPRP) the composition is skewed to pro residues.

Belongs to the cullin family. Interacts with CDK2.

Its function is as follows. Cell cycle associated protein capable of promoting cell proliferation through the activation of CDK2 at the G1/S phase transition. The chain is CDK2-associated and cullin domain-containing protein 1 (Cacul1) from Rattus norvegicus (Rat).